An 890-amino-acid polypeptide reads, in one-letter code: Potassium/sodium hyperpolarization-activated cyclic nucleotide-gated channel 1 (890 aa).

Positions 1–93 (MEGGGKPNSS…AEGPRRQYGF (93 aa)) are disordered. At 1-142 (MEGGGKPNSS…WIIHPYSDFR (142 aa)) the chain is on the cytoplasmic side. Residues 8–34 (NSSSNSRDDGNSVFPAKASATGAGPAA) show a composition bias toward low complexity. The segment covering 62–77 (DGGGGGGGGGGGGEEP) has biased composition (gly residues). Residues 143–164 (FYWDLIMLIMMVGNLVIIPVGI) traverse the membrane as a helical segment. At 165-173 (TFFTEQTTT) the chain is on the extracellular side. Residues 174 to 194 (PWIIFNVASDTVFLLDLIMNF) form a helical membrane-spanning segment. The Cytoplasmic portion of the chain corresponds to 195-215 (RTGTVNEDSSEIILDPKVIKM). The chain crosses the membrane as a helical span at residues 216–236 (NYLKSWFVVDFISSIPVDYIF). Over 237–260 (LIVEKGMDSEVYKTARALRIVRFT) the chain is Extracellular. Residues 261–281 (KILSLLRLLRLSRLIRYIHQW) traverse the membrane as a helical; Voltage-sensor segment. Residues 282 to 295 (EEIFHMTYDLASAV) are Cytoplasmic-facing. Residues 296–318 (VRIFNLIGMMLLLCHWDGCLQFL) form a helical membrane-spanning segment. Residues 319–344 (VPLLQDFPPDCWVSLNEMVNDSWGKQ) lie on the Extracellular side of the membrane. N-linked (GlcNAc...) asparagine glycosylation occurs at Asn338. Residues 345–366 (YSYALFKAMSHMLCIGYGAQAP) constitute an intramembrane region (pore-forming). Residues 358 to 362 (CIGYG) carry the Selectivity filter motif. At 367-371 (VSMSD) the chain is on the extracellular side. Residues 372-392 (LWITMLSMIVGATCYAMFVGH) form a helical membrane-spanning segment. Topologically, residues 393 to 890 (ATALIQSLDS…AEKPRFASNL (498 aa)) are cytoplasmic. Positions 539, 540, 542, 549, 550, 590, and 593 each coordinate 3',5'-cyclic AMP. Low complexity-rich tracts occupy residues 644–691 (MTTL…PQPS) and 731–749 (QQQPQQQVQQSQPPQTQPQ). Disordered stretches follow at residues 644-692 (MTTL…QPSA), 725-796 (SQLS…LPHE), and 845-890 (MSSG…ASNL). Residues 770–780 (STQALHNTNLT) show a composition bias toward polar residues. Residues 854–865 (RGVPPAPPPPAA) are compositionally biased toward pro residues. Over residues 880–890 (DAEKPRFASNL) the composition is skewed to basic and acidic residues.

This sequence belongs to the potassium channel HCN family. As to quaternary structure, homotetramer. Heterotetramer with HCN2. The potassium channel is composed of a homo- or heterotetrameric complex of pore-forming subunits. Interacts with KCNE2. Interacts with the SH3 domain of CSK. In terms of tissue distribution, detected in brain, in particular in amygdala and hippocampus, while expression in caudate nucleus, corpus callosum, substantia nigra, subthalamic nucleus and thalamus is very low or not detectable. Detected at very low levels in muscle and pancreas.

It is found in the cell membrane. The catalysed reaction is Na(+)(in) = Na(+)(out). It catalyses the reaction K(+)(in) = K(+)(out). Its activity is regulated as follows. Activated by cAMP, and at 10-100 times higher concentrations, also by cGMP. cAMP binding promotes tetramerization and formation of an active channel. Compared to other family members, cAMP has less stimulatory effect on HCN1 because part of the molecules already contain bound cAMP and form homotetramers when cAMP levels are low, this inherent tetramerization in HCN1 results in a weaker response to increased cAMP. Inhibited by Cs(1+), zatebradine, capsazepine and ZD7288. Functionally, hyperpolarization-activated ion channel that are permeable to sodium and potassium ions. Displays lower selectivity for K(+) over Na(+) ions. Contributes to the native pacemaker currents in heart (If) and in the generation of the I(h) current which controls neuron excitability. Participates in cerebellar mechanisms of motor learning. May mediate responses to sour stimuli. In Homo sapiens (Human), this protein is Potassium/sodium hyperpolarization-activated cyclic nucleotide-gated channel 1 (HCN1).